The chain runs to 160 residues: uncharacterized protein (160 aa).

A helical transmembrane segment spans residues 8–28; sequence LLFILVFISGFILFTVYSYTA.

Its subcellular location is the membrane. This is an uncharacterized protein from Escherichia coli (strain K12).